The primary structure comprises 87 residues: MNSLLMITACFFLIGTVWAKEGYLVNKSTGCKYGCLLLGKNEGCDKECKAKNQGGSYGYCYAFGCWCEGLPESTPTYPLPNKSCSKK.

Residues 1–19 (MNSLLMITACFFLIGTVWA) form the signal peptide. The LCN-type CS-alpha/beta domain occupies 20-85 (KEGYLVNKST…TYPLPNKSCS (66 aa)). 4 disulfides stabilise this stretch: C31/C84, C35/C60, C44/C65, and C48/C67.

This sequence belongs to the long (4 C-C) scorpion toxin superfamily. Sodium channel inhibitor family. Beta subfamily. As to expression, expressed by the venom gland.

It localises to the secreted. Its function is as follows. Beta toxins bind voltage-independently at site-4 of sodium channels (Nav) and shift the voltage of activation toward more negative potentials thereby affecting sodium channel activation and promoting spontaneous and repetitive firing. This toxin is lethal to crustaceans (freshwater crayfish (Cambarellus montezumae spp.)), it provokes a reversible paralysis to insects (crickets (Achaeta spp.)), but is not toxic to mice. At high concentrations, it does displace the (beta) mammal-specific toxin Cn2 from rat brain synaptosomes. This chain is Toxin Css39.8, found in Centruroides suffusus (Durango bark scorpion).